A 340-amino-acid polypeptide reads, in one-letter code: Protein-tyrosine-phosphatase PTP1 (340 aa).

In terms of domain architecture, Tyrosine-protein phosphatase spans 58 to 326; sequence IAHEFTGLQA…FFCYNAIVDE (269 aa). Residues Asp-234, 265–271, and Gln-311 contribute to the substrate site; that span reads CSAGIGR. Cys-265 functions as the Phosphocysteine intermediate in the catalytic mechanism.

As to quaternary structure, interacts with MPK6. Interacts with KIN10. Post-translationally, phosphorylated by KIN10. In terms of tissue distribution, expressed in roots, stems and flowers, and at low levels in leaves.

It localises to the cytoplasm. The protein localises to the cytosol. Its subcellular location is the nucleus. It catalyses the reaction O-phospho-L-tyrosyl-[protein] + H2O = L-tyrosyl-[protein] + phosphate. With respect to regulation, inhibited by hydrogen peroxide. Protein-tyrosine-phosphatase that dephosphorylates and probably inhibits MPK6 in non-oxidative stress conditions. In association with MKP1, represses salicylic acid (SA) and camalexin biosynthesis, thus modulating defense response. May also repress MPK3. Dephosphorylates and inactivates MPK4 in vitro. This is Protein-tyrosine-phosphatase PTP1 (PTP1) from Arabidopsis thaliana (Mouse-ear cress).